The sequence spans 267 residues: Hydroxyethylthiazole kinase (267 aa).

M48 contributes to the substrate binding site. ATP is bound by residues R124 and S170. G197 lines the substrate pocket.

It belongs to the Thz kinase family. The cofactor is Mg(2+).

The enzyme catalyses 5-(2-hydroxyethyl)-4-methylthiazole + ATP = 4-methyl-5-(2-phosphooxyethyl)-thiazole + ADP + H(+). It functions in the pathway cofactor biosynthesis; thiamine diphosphate biosynthesis; 4-methyl-5-(2-phosphoethyl)-thiazole from 5-(2-hydroxyethyl)-4-methylthiazole: step 1/1. In terms of biological role, catalyzes the phosphorylation of the hydroxyl group of 4-methyl-5-beta-hydroxyethylthiazole (THZ). This Leptospira biflexa serovar Patoc (strain Patoc 1 / Ames) protein is Hydroxyethylthiazole kinase.